A 309-amino-acid chain; its full sequence is UPF0276 protein RB0508 (309 aa).

The protein belongs to the UPF0276 family.

The chain is UPF0276 protein RB0508 from Rhizobium meliloti (strain 1021) (Ensifer meliloti).